We begin with the raw amino-acid sequence, 483 residues long: Regulatory protein ViaA (483 aa).

It belongs to the ViaA family. As to quaternary structure, homodimer. Interacts with RavA.

It is found in the cytoplasm. Its function is as follows. Component of the RavA-ViaA chaperone complex, which may act on the membrane to optimize the function of some of the respiratory chains. ViaA stimulates the ATPase activity of RavA. This is Regulatory protein ViaA from Salmonella dublin (strain CT_02021853).